A 257-amino-acid polypeptide reads, in one-letter code: Small ribosomal subunit protein uS2 (257 aa).

A disordered region spans residues 237–257 (MDEADGSEAEPEDPAAPESAE). Positions 240 to 257 (ADGSEAEPEDPAAPESAE) are enriched in acidic residues.

The protein belongs to the universal ribosomal protein uS2 family.

The protein is Small ribosomal subunit protein uS2 of Chlorobium phaeovibrioides (strain DSM 265 / 1930) (Prosthecochloris vibrioformis (strain DSM 265)).